The sequence spans 247 residues: 5'-nucleotidase SurE (247 aa).

4 residues coordinate a divalent metal cation: Asp8, Asp9, Ser39, and Asn91.

This sequence belongs to the SurE nucleotidase family. A divalent metal cation serves as cofactor.

The protein localises to the cytoplasm. The enzyme catalyses a ribonucleoside 5'-phosphate + H2O = a ribonucleoside + phosphate. In terms of biological role, nucleotidase that shows phosphatase activity on nucleoside 5'-monophosphates. This is 5'-nucleotidase SurE from Aromatoleum aromaticum (strain DSM 19018 / LMG 30748 / EbN1) (Azoarcus sp. (strain EbN1)).